The sequence spans 654 residues: Bifunctional 3'-phosphoadenosine 5'-phosphosulfate synthase pps-1 (654 aa).

A disordered region spans residues 1 to 26 (MLTPRDENNEGDAMPMLKKPRYSSLS). Positions 1–231 (MLTPRDENNE…VLDHLESKGL (231 aa)) are adenylyl-sulfate kinase. 66 to 71 (GAGKTT) provides a ligand contact to ATP. Adenosine 5'-phosphosulfate is bound by residues 93–96 (DNIR), Phe105, 110–113 (RQEN), 136–137 (IS), Lys175, and 190–191 (GF). Residues Cys218, 449 to 452 (QLRN), 550 to 554 (GRDPA), and Ala592 contribute to the ATP site. A sulfate adenylyltransferase region spans residues 242 to 653 (VRELFVSDDL…AGYYKSLQNS (412 aa)).

This sequence in the N-terminal section; belongs to the APS kinase family. The protein in the C-terminal section; belongs to the sulfate adenylyltransferase family.

Its subcellular location is the nucleus. It carries out the reaction sulfate + ATP + H(+) = adenosine 5'-phosphosulfate + diphosphate. The catalysed reaction is adenosine 5'-phosphosulfate + ATP = 3'-phosphoadenylyl sulfate + ADP + H(+). It functions in the pathway sulfur metabolism; sulfate assimilation. In terms of biological role, bifunctional enzyme with both ATP sulfurylase and APS kinase activity, which mediates two steps in the sulfate activation pathway. The first step is the transfer of a sulfate group to ATP to yield adenosine 5'-phosphosulfate (APS), and the second step is the transfer of a phosphate group from ATP to APS yielding 3'-phosphoadenylylsulfate (PAPS: activated sulfate donor used by sulfotransferase). Required for normal growth and development. Involved in several aspects of both embryonic and postembryonic development, including molting, changes in cell shape, and patterning of epithelial and muscle cells. This is Bifunctional 3'-phosphoadenosine 5'-phosphosulfate synthase pps-1 from Caenorhabditis elegans.